We begin with the raw amino-acid sequence, 297 residues long: N-acetylneuraminate lyase (297 aa).

Aceneuramate is bound by residues serine 47 and threonine 48. Tyrosine 137 (proton donor) is an active-site residue. The active-site Schiff-base intermediate with substrate is lysine 165. 5 residues coordinate aceneuramate: threonine 167, glycine 189, aspartate 191, glutamate 192, and serine 208.

Belongs to the DapA family. NanA subfamily. As to quaternary structure, homotetramer.

The protein localises to the cytoplasm. It carries out the reaction aceneuramate = aldehydo-N-acetyl-D-mannosamine + pyruvate. The protein operates within amino-sugar metabolism; N-acetylneuraminate degradation; D-fructose 6-phosphate from N-acetylneuraminate: step 1/5. Its function is as follows. Catalyzes the reversible aldol cleavage of N-acetylneuraminic acid (sialic acid; Neu5Ac) to form pyruvate and N-acetylmannosamine (ManNAc) via a Schiff base intermediate. This is N-acetylneuraminate lyase from Enterobacter sp. (strain 638).